The sequence spans 221 residues: Deoxyribose-phosphate aldolase (221 aa).

Asp91 (proton donor/acceptor) is an active-site residue. The active-site Schiff-base intermediate with acetaldehyde is Lys153. Lys182 serves as the catalytic Proton donor/acceptor.

This sequence belongs to the DeoC/FbaB aldolase family. DeoC type 1 subfamily.

The protein resides in the cytoplasm. The catalysed reaction is 2-deoxy-D-ribose 5-phosphate = D-glyceraldehyde 3-phosphate + acetaldehyde. Its pathway is carbohydrate degradation; 2-deoxy-D-ribose 1-phosphate degradation; D-glyceraldehyde 3-phosphate and acetaldehyde from 2-deoxy-alpha-D-ribose 1-phosphate: step 2/2. Functionally, catalyzes a reversible aldol reaction between acetaldehyde and D-glyceraldehyde 3-phosphate to generate 2-deoxy-D-ribose 5-phosphate. In Clostridium botulinum (strain Alaska E43 / Type E3), this protein is Deoxyribose-phosphate aldolase.